We begin with the raw amino-acid sequence, 451 residues long: Exodeoxyribonuclease 7 large subunit (451 aa).

The protein belongs to the XseA family. In terms of assembly, heterooligomer composed of large and small subunits.

It localises to the cytoplasm. The enzyme catalyses Exonucleolytic cleavage in either 5'- to 3'- or 3'- to 5'-direction to yield nucleoside 5'-phosphates.. In terms of biological role, bidirectionally degrades single-stranded DNA into large acid-insoluble oligonucleotides, which are then degraded further into small acid-soluble oligonucleotides. In Thiobacillus denitrificans (strain ATCC 25259 / T1), this protein is Exodeoxyribonuclease 7 large subunit.